Here is a 66-residue protein sequence, read N- to C-terminus: Large ribosomal subunit protein bL35 (66 aa).

It belongs to the bacterial ribosomal protein bL35 family.

The polypeptide is Large ribosomal subunit protein bL35 (Wigglesworthia glossinidia brevipalpis).